The primary structure comprises 270 residues: Undecaprenyl-diphosphatase 1 (270 aa).

A run of 7 helical transmembrane segments spans residues 5–25 (YYIL…PIPI), 42–62 (IEGF…VLLI), 89–109 (FFFI…GVLF), 117–137 (LKGV…LWII), 192–212 (FSFL…ITDI), 220–240 (TLFV…YISL), and 250–270 (GNLK…LIFL).

It belongs to the UppP family.

It is found in the cell membrane. The catalysed reaction is di-trans,octa-cis-undecaprenyl diphosphate + H2O = di-trans,octa-cis-undecaprenyl phosphate + phosphate + H(+). Catalyzes the dephosphorylation of undecaprenyl diphosphate (UPP). Confers resistance to bacitracin. This Bacillus cereus (strain ATCC 10987 / NRS 248) protein is Undecaprenyl-diphosphatase 1.